The primary structure comprises 579 residues: SLAIN motif-containing protein 1 (579 aa).

Disordered regions lie at residues 1-21, 60-95, 135-162, 233-258, 289-313, and 347-454; these read MMAE…GPGP, LLLQ…GPGA, GGGG…PPTL, YTSR…LEDD, STSA…TCSD, and IPHS…PGQI. A compositionally biased stretch (low complexity) spans 9–21; sequence ASPVAASGAGPGP. Positions 21 to 56 form a coiled coil; it reads PVVNAELEVKKLQELVRKLEKQNEQLRSRAASAAAA. Residues 63 to 73 show a composition bias toward pro residues; that stretch reads QPPPPSAPPPA. Over residues 141–154 the composition is skewed to low complexity; the sequence is EPGTAGTPPGEAAT. Residues 233 to 243 show a composition bias toward polar residues; the sequence is YTSRGSPLSPQ. Ser-241 carries the post-translational modification Phosphoserine. Composition is skewed to low complexity over residues 244–253 and 289–305; these read SSIDSELSTS and STSA…SLSS. Over residues 362-373 the composition is skewed to polar residues; sequence SPSTQYFPSNNF. Residues 374–390 are compositionally biased toward low complexity; the sequence is QQPQYYPPQAQTADQQP. A compositionally biased stretch (polar residues) spans 412 to 432; it reads AAASSNLSSPVTVRSSQSFDS. Arg-469 carries the post-translational modification Asymmetric dimethylarginine. Residues 479–516 are disordered; that stretch reads SPTVQGSSSSGSSGSSGGSGSGMPLSNGTQLYSTTGIP. The span at 502-516 shows a compositional bias: polar residues; sequence PLSNGTQLYSTTGIP. Arg-554 carries the asymmetric dimethylarginine modification.

Belongs to the SLAIN motif-containing family. Interacts with MAPRE1, MAPRE2, MAPRE3 and CKAP5. Interacts with ZDHHC17 (via ANK repeats). In terms of tissue distribution, expressed in embryonic stem cells. Expressed in adult bone marrow, brain, kidney, lung, testis and thymus. Expressed in colon. Isoform 1 is highly expressed in brain. Isoform 2 is more widely expressed in bone marrow, brain, colon, kidney, lung and thymus.

It localises to the cytoplasm. It is found in the cytoskeleton. Microtubule plus-end tracking protein that might be involved in the regulation of cytoplasmic microtubule dynamics, microtubule organization and microtubule elongation. The protein is SLAIN motif-containing protein 1 (Slain1) of Mus musculus (Mouse).